A 103-amino-acid polypeptide reads, in one-letter code: UPF0145 protein RSKD131_1772 (103 aa).

Belongs to the UPF0145 family.

This is UPF0145 protein RSKD131_1772 from Cereibacter sphaeroides (strain KD131 / KCTC 12085) (Rhodobacter sphaeroides).